The following is a 645-amino-acid chain: Threonine--tRNA ligase (645 aa).

Residues 1–63 (MEQINIQFPD…ETDGSIEIVT (63 aa)) form the TGS domain. A catalytic region spans residues 242–540 (DHRKIGKELE…LTEETKGAFP (299 aa)). The Zn(2+) site is built by Cys-336, His-387, and His-517.

This sequence belongs to the class-II aminoacyl-tRNA synthetase family. In terms of assembly, homodimer. Zn(2+) is required as a cofactor.

Its subcellular location is the cytoplasm. It carries out the reaction tRNA(Thr) + L-threonine + ATP = L-threonyl-tRNA(Thr) + AMP + diphosphate + H(+). Its function is as follows. Catalyzes the attachment of threonine to tRNA(Thr) in a two-step reaction: L-threonine is first activated by ATP to form Thr-AMP and then transferred to the acceptor end of tRNA(Thr). Also edits incorrectly charged L-seryl-tRNA(Thr). The protein is Threonine--tRNA ligase of Staphylococcus aureus (strain NCTC 8325 / PS 47).